The following is a 312-amino-acid chain: Tetraspanin-17 (312 aa).

A run of 4 helical transmembrane segments spans residues 17 to 37 (IFSI…LWML), 64 to 84 (VSLV…CGAV), 89 to 109 (FLLL…VAMG), and 274 to 294 (IWIF…GICL).

This sequence belongs to the tetraspanin (TM4SF) family. Expressed in dopaminergic neurons, head muscles, vulva and spermatheca.

It is found in the cell membrane. The protein resides in the cell projection. Its subcellular location is the dendrite. The protein localises to the axon. Functionally, protects dopaminergic neurons against oxidative stress-induced neurodegeneration. May act partly via dopamine receptor dop-2 to negatively regulate dopamine reuptake transporter dat-1 activity. Also plays a role in modulating behaviors linked to dopamine signaling. Confers protection against oxidative stress in the whole body. This is Tetraspanin-17 from Caenorhabditis elegans.